The chain runs to 326 residues: Type II methyltransferase M.EcoRI (326 aa).

Belongs to the N(4)/N(6)-methyltransferase family. Monomer.

It catalyses the reaction a 2'-deoxyadenosine in DNA + S-adenosyl-L-methionine = an N(6)-methyl-2'-deoxyadenosine in DNA + S-adenosyl-L-homocysteine + H(+). Functionally, a methylase that recognizes the double-stranded sequence 5'-GAATTC-3', methylates A-3 on both strands, and protects the DNA from cleavage by the EcoRI endonuclease. This chain is Type II methyltransferase M.EcoRI (ecoRIM), found in Escherichia coli.